The primary structure comprises 73 residues: Translation initiation factor IF-1 (73 aa).

The S1-like domain occupies 1–73; sequence MAKKEGALEL…TRGRIVYRHK (73 aa).

The protein belongs to the IF-1 family. As to quaternary structure, component of the 30S ribosomal translation pre-initiation complex which assembles on the 30S ribosome in the order IF-2 and IF-3, IF-1 and N-formylmethionyl-tRNA(fMet); mRNA recruitment can occur at any time during PIC assembly.

It localises to the cytoplasm. Its function is as follows. One of the essential components for the initiation of protein synthesis. Stabilizes the binding of IF-2 and IF-3 on the 30S subunit to which N-formylmethionyl-tRNA(fMet) subsequently binds. Helps modulate mRNA selection, yielding the 30S pre-initiation complex (PIC). Upon addition of the 50S ribosomal subunit IF-1, IF-2 and IF-3 are released leaving the mature 70S translation initiation complex. The protein is Translation initiation factor IF-1 of Cutibacterium acnes (strain DSM 16379 / KPA171202) (Propionibacterium acnes).